A 66-amino-acid polypeptide reads, in one-letter code: Conotoxin Bu1.4 (66 aa).

An N-terminal signal peptide occupies residues 1–23; sequence MGMRMRMMFTVFLLVVLANTVVS. Residues 24–46 constitute a propeptide that is removed on maturation; it reads FPSDRDSDGADAEASDEPVEFER. Residues 25–48 form a disordered region; the sequence is PSDRDSDGADAEASDEPVEFERDE. A compositionally biased stretch (acidic residues) spans 32–42; that stretch reads GADAEASDEPV. 2 disulfide bridges follow: C51–C57 and C52–C62. T63 is modified (threonine amide).

It belongs to the conotoxin A superfamily. As to expression, expressed by the venom duct.

It is found in the secreted. The chain is Conotoxin Bu1.4 from Conus bullatus (Bubble cone).